Consider the following 101-residue polypeptide: Urease subunit beta (101 aa).

It belongs to the urease beta subunit family. As to quaternary structure, heterotrimer of UreA (gamma), UreB (beta) and UreC (alpha) subunits. Three heterotrimers associate to form the active enzyme.

The protein localises to the cytoplasm. It carries out the reaction urea + 2 H2O + H(+) = hydrogencarbonate + 2 NH4(+). Its pathway is nitrogen metabolism; urea degradation; CO(2) and NH(3) from urea (urease route): step 1/1. The protein is Urease subunit beta of Azoarcus sp. (strain BH72).